The following is a 376-amino-acid chain: Acetate kinase (376 aa).

Asn-7 provides a ligand contact to Mg(2+). Lys-14 is an ATP binding site. Residue Arg-71 coordinates substrate. Asp-128 acts as the Proton donor/acceptor in catalysis. ATP contacts are provided by residues 188–192 (HLGNG), 262–264 (DFR), and 310–314 (GVGEN). Glu-364 contributes to the Mg(2+) binding site.

This sequence belongs to the acetokinase family. Homodimer. The cofactor is Mg(2+). Requires Mn(2+) as cofactor.

The protein localises to the cytoplasm. The catalysed reaction is acetate + ATP = acetyl phosphate + ADP. Its pathway is metabolic intermediate biosynthesis; acetyl-CoA biosynthesis; acetyl-CoA from acetate: step 1/2. Catalyzes the formation of acetyl phosphate from acetate and ATP. Can also catalyze the reverse reaction. The chain is Acetate kinase from Mycolicibacterium smegmatis (strain ATCC 700084 / mc(2)155) (Mycobacterium smegmatis).